Reading from the N-terminus, the 689-residue chain is Glycine--tRNA ligase beta subunit (689 aa).

Belongs to the class-II aminoacyl-tRNA synthetase family. Tetramer of two alpha and two beta subunits.

The protein resides in the cytoplasm. The catalysed reaction is tRNA(Gly) + glycine + ATP = glycyl-tRNA(Gly) + AMP + diphosphate. In Dictyoglomus turgidum (strain DSM 6724 / Z-1310), this protein is Glycine--tRNA ligase beta subunit.